Here is a 542-residue protein sequence, read N- to C-terminus: Chaperonin GroEL (542 aa).

Residues Thr-29–Pro-32, Lys-50, Asp-86–Thr-90, Gly-414, Asn-477–Ala-479, and Asp-493 each bind ATP.

This sequence belongs to the chaperonin (HSP60) family. As to quaternary structure, forms a cylinder of 14 subunits composed of two heptameric rings stacked back-to-back. Interacts with the co-chaperonin GroES.

Its subcellular location is the cytoplasm. The enzyme catalyses ATP + H2O + a folded polypeptide = ADP + phosphate + an unfolded polypeptide.. Its function is as follows. Together with its co-chaperonin GroES, plays an essential role in assisting protein folding. The GroEL-GroES system forms a nano-cage that allows encapsulation of the non-native substrate proteins and provides a physical environment optimized to promote and accelerate protein folding. The protein is Chaperonin GroEL of Sulfurovum sp. (strain NBC37-1).